A 198-amino-acid polypeptide reads, in one-letter code: DnaJ homolog subfamily C member 5 (198 aa).

A phosphoserine mark is found at Ser8, Ser10, Ser12, and Ser15. The 70-residue stretch at 13 to 82 folds into the J domain; the sequence is GESLYHVLGL…RNIYDKYGSL (70 aa). Phosphotyrosine is present on Tyr17. The residue at position 56 (Lys56) is an N6-acetyllysine. Ser151 carries the phosphoserine modification.

In terms of assembly, oligomers. Homodimer. Interacts with the chaperone complex consisting of HSC70 and SGTA. Interacts with ZDHHC13 (via ANK repeats). Interacts with ZDHHC17 (via ANK repeats). Interacts with SYT1, SYT5 and SYT7, and with SYT9, forming a complex with SNAP25. Ser-10 phosphorylation induces an order-to-disorder transition triggering the interaction with Lys-58. This conformational switch modulates DNAJC5's cellular functions by reducing binding to syntaxin and synaptogamin without altering HSC70 interactions. In terms of processing, palmitoylated. Could be palmitoylated by DHHC3, DHHC7, DHHC15 and DHHC17. Palmitoylation occurs probably in the cysteine-rich domain and regulates DNAJC5 membrane attachment. As to expression, expressed in pancreas, kidney, skeletal muscle, liver, lung, placenta, brain and heart.

It is found in the cytoplasm. It localises to the cytosol. The protein localises to the membrane. Its subcellular location is the cytoplasmic vesicle. The protein resides in the secretory vesicle. It is found in the chromaffin granule membrane. It localises to the melanosome. The protein localises to the cell membrane. In terms of biological role, acts as a general chaperone in regulated exocytosis. Acts as a co-chaperone for the SNARE protein SNAP-25. Involved in the calcium-mediated control of a late stage of exocytosis. May have an important role in presynaptic function. May be involved in calcium-dependent neurotransmitter release at nerve endings. This Homo sapiens (Human) protein is DnaJ homolog subfamily C member 5.